The sequence spans 320 residues: Mitochondrial thiamine pyrophosphate carrier 1 (320 aa).

3 Solcar repeats span residues 12-110 (GTRR…TTQA), 119-205 (PQPV…LRPS), and 213-308 (PFGS…TLRA). Helical transmembrane passes span 17–35 (VVLA…VAPL), 91–107 (LMYV…YRTT), 125–145 (FVAG…LDLL), 180–197 (GCSA…LFFA), 219–239 (ALAG…LDLV), and 283–300 (GLTV…VTMW).

The protein belongs to the mitochondrial carrier (TC 2.A.29) family.

It localises to the mitochondrion inner membrane. Mitochondrial transporter that mediates uptake of thiamine pyrophosphate (ThPP) into mitochondria. This is Mitochondrial thiamine pyrophosphate carrier 1 (tpc1) from Aspergillus terreus (strain NIH 2624 / FGSC A1156).